The sequence spans 292 residues: NAD(P)H-hydrate epimerase (292 aa).

Residues Met1–Thr52 constitute a mitochondrion transit peptide. In terms of domain architecture, YjeF N-terminal spans Ala68 to Leu279. Asn122 to Asp126 contacts (6S)-NADPHX. 2 residues coordinate K(+): Asn123 and Asp189. Residues Gly193 to Ala199 and Asp222 each bind (6S)-NADPHX. Residue Ser225 coordinates K(+).

It belongs to the NnrE/AIBP family. The cofactor is K(+).

Its subcellular location is the mitochondrion. The protein resides in the secreted. It carries out the reaction (6R)-NADHX = (6S)-NADHX. The enzyme catalyses (6R)-NADPHX = (6S)-NADPHX. Its function is as follows. Catalyzes the epimerization of the S- and R-forms of NAD(P)HX, a damaged form of NAD(P)H that is a result of enzymatic or heat-dependent hydration. This is a prerequisite for the S-specific NAD(P)H-hydrate dehydratase to allow the repair of both epimers of NAD(P)HX. This Xenopus tropicalis (Western clawed frog) protein is NAD(P)H-hydrate epimerase.